The chain runs to 499 residues: Probable inactive receptor-like protein kinase At3g56050 (499 aa).

A signal peptide spans 1–31 (MSNNWKSVRLRLQNRTLVFLLVILSFGSCYS). N-linked (GlcNAc...) asparagine glycosylation occurs at Asn14. Residues 32–146 (LKSQGDGFLE…SKTSSNSTIP (115 aa)) lie on the Extracellular side of the membrane. Positions 80-121 (RDRPVARATPPSSSVSTRPDAKRSSTLPPPQKSPPAQHVSAP) are disordered. Asn142 carries an N-linked (GlcNAc...) asparagine glycan. Residues 147 to 167 (IVAGCIAGAVFILLLATGVFF) traverse the membrane as a helical segment. Topologically, residues 168-499 (FKSKAGKSVN…WAELEVLSTA (332 aa)) are cytoplasmic. The region spanning 208–474 (EDFSNVIGSC…EVTGRLREIT (267 aa)) is the Protein kinase domain.

It is found in the cell membrane. In Arabidopsis thaliana (Mouse-ear cress), this protein is Probable inactive receptor-like protein kinase At3g56050.